The following is a 701-amino-acid chain: Heterodisulfide reductase subunit A-like protein (701 aa).

152–175 (GGGIAGIFAALDIANAGYKVYLVE) is an FAD binding site. The 4Fe-4S ferredoxin-type 1 domain maps to 239-268 (KQTWVDWDLCTGCGACTDVCPPKARVPDEF). Residues Cys248, Cys251, Cys254, Cys326, Cys627, Cys630, Cys633, Cys637, Cys660, Cys663, Cys666, and Cys670 each coordinate [4Fe-4S] cluster. 4Fe-4S ferredoxin-type domains are found at residues 618–647 (LVSE…MTKY) and 651–680 (MRAE…LHGF).

The protein belongs to the HdrA family. The heterodisulfide reductase is composed of three subunits; HdlA, HdlB and HdlC. It forms a complex with the F420-non-reducing hydrogenase (Mvh), which provides the reducing equivalents to the heterodisulfide reductase. The cofactor is [4Fe-4S] cluster. It depends on FAD as a cofactor.

Its subcellular location is the cytoplasm. In terms of biological role, has oxidoreductase activity. The Hdl and Mvh subunits may together mediate electron transfer from hydrogen to an unidentified electron acceptor on the cytoplasmic side of the membrane. The sequence is that of Heterodisulfide reductase subunit A-like protein (hdlA) from Archaeoglobus profundus (strain DSM 5631 / JCM 9629 / NBRC 100127 / Av18).